Reading from the N-terminus, the 848-residue chain is Neuroligin-3 (848 aa).

Residues 1–37 form the signal peptide; the sequence is MWLRLGPPSLSLSPKPTVGRSLCLTLWFLSLALRAST. Topologically, residues 38-709 are extracellular; the sequence is QAPAPTVNTH…NPRDYSTELS (672 aa). The N-linked (GlcNAc...) asparagine glycan is linked to asparagine 98. A disulfide bridge links cysteine 106 with cysteine 141. A disordered region spans residues 170 to 195; the sequence is RKGGSGAKKQGEDLADNDGDEDEDIR. Residues 182–194 are compositionally biased toward acidic residues; sequence DLADNDGDEDEDI. 2 cysteine pairs are disulfide-bonded: cysteine 340-cysteine 351 and cysteine 510-cysteine 544. The N-linked (GlcNAc...) asparagine glycan is linked to asparagine 545. Polar residues-rich tracts occupy residues 645–656 and 677–689; these read TKVPPPDTTHSS and AYSNENAQGSWNG. A disordered region spans residues 645–694; that stretch reads TKVPPPDTTHSSHITRRPNGKTWSTKRPAISPAYSNENAQGSWNGDQDAG. Residues 710 to 730 traverse the membrane as a helical segment; it reads VTIAVGASLLFLNVLAFAALY. Topologically, residues 731-848 are cytoplasmic; it reads YRKDKRRQEP…LPHSHSTTRV (118 aa). At serine 745 the chain carries Phosphoserine. Tyrosine 792 is modified (phosphotyrosine).

The protein belongs to the type-B carboxylesterase/lipase family. As to quaternary structure, homodimer, and heterodimer with NLGN1 and NLGN2. Interacts with neurexins NRXN1, NRXN2 and NRXN3. Interaction with neurexins is mediated by heparan sulfate glycan modification on neurexin. Interacts (via its C-terminus) with DLG4/PSD-95 (via PDZ domain 3). As to expression, expressed in the blood vessel walls (at protein level). Detected in throughout the brain and in spinal cord. Detected in brain, and at lower levels in pancreas islet beta cells.

Its subcellular location is the cell membrane. The protein localises to the synapse. In terms of biological role, cell surface protein involved in cell-cell-interactions via its interactions with neurexin family members. Plays a role in synapse function and synaptic signal transmission, and may mediate its effects by clustering other synaptic proteins. May promote the initial formation of synapses, but is not essential for this. May also play a role in glia-glia or glia-neuron interactions in the developing peripheral nervous system. The chain is Neuroligin-3 (NLGN3) from Homo sapiens (Human).